The following is a 936-amino-acid chain: MVYSRRGSLGSRLLLLWLLLAYWKAGSGQLHYSIPEEAKHGTFVGRIAQDLGLELAELVPRLFRVASKGRGDLLEVNLQNGILFVNSRIDREELCRRRAECSIHLEVIVDRPLQVFHVEVAVKDINDNPPRFSRQEQRLFILESRMPDSRFPLEGASDLDIGANAQLRYRLNPNEYFDLDVKTNEEETNFLELVLRKSLDREETQEHRLLVIATDGGKPELTGTVQLLINVLDANDNAPEFDKSIYNVRLLENAPSGTLVIKLNASDADEGINKEIVYFFSNLVLDDVKSKFIINSNTGEIKVNGELDYEDYNSYEINIDAMDKSTFPLSGHCKVVVKLLDVNDNTPEMAITTLFLPVKEDAPLSTVIALISVSDRDSGANGQVTCSLMPHVPFKLVSTFKNYYSLVLDSALDRESVSVYELVVTARDGGSPSLWATASVSVEVADVNDNAPAFAQPQYTVFVKENNPPGCHIFTVSARDADAQENALVSYSLVERRVGERPLSSYVSVHAESGKVYALQPLDHEEVELLQFQVSARDAGVPPLGSNVTLQVFVLDENDNAPALLVPRVGGTGGAVSELVPRSVGAGHVVAKVRAVDPDSGYNAWLSYELQPAPGSARIPFRVGLYTGEISTTRSLDETEAPRHRLLVLVKDHGEPPLTATATVLVSLVESGQAPKASSRASAGAVGPEAALVDVNVYLIIAICAVSSLLVLTLLLYTALRCSAQPTEAVCTRGKPTLLCSSAVGSWSYSQQRRQRVCSGEAPPKTDLMAFSPSLPQGPTSTDNPRQPNPDWRYSASLRAGMHSSVHLEEAGILRAGPGGPDQQWPTVSSATPEPEAGEVSPPVGAGVNSNSWTFKYGPGNPKQSGPGELPDKFIIPGSPAIISIRQEPTNSQIDKSDFITFGKKEETKKKKKKKKGNKTQEKKEKGNSTTDNSDQ.

The first 28 residues, 1–28, serve as a signal peptide directing secretion; it reads MVYSRRGSLGSRLLLLWLLLAYWKAGSG. The Extracellular portion of the chain corresponds to 29 to 696; sequence QLHYSIPEEA…GPEAALVDVN (668 aa). 6 Cadherin domains span residues 33-132, 156-241, 242-349, 350-454, 455-564, and 580-677; these read SIPE…PPRF, ASDL…APEF, DKSI…TPEM, AITT…APAF, AQPQ…APAL, and VPRS…APKA. The N-linked (GlcNAc...) asparagine glycan is linked to N264. The N-linked (GlcNAc...) asparagine glycan is linked to N547. The helical transmembrane segment at 697–717 threads the bilayer; it reads VYLIIAICAVSSLLVLTLLLY. The Cytoplasmic portion of the chain corresponds to 718–936; sequence TALRCSAQPT…GNSTTDNSDQ (219 aa). 2 disordered regions span residues 759-793 and 816-936; these read SGEA…PDWR and AGPG…NSDQ. PXXP repeat units lie at residues 773-776, 785-788, 818-821, 873-876, and 877-890; these read PSLP, PRQP, PGGP, KFII, and PGSP…QEPT. Residues 773–890 form a 5 X 4 AA repeats of P-X-X-P region; the sequence is PSLPQGPTST…AIISIRQEPT (118 aa). The span at 774-786 shows a compositional bias: polar residues; the sequence is SLPQGPTSTDNPR. Basic and acidic residues predominate over residues 895-909; that stretch reads DKSDFITFGKKEETK.

The protein resides in the cell membrane. In terms of biological role, potential calcium-dependent cell-adhesion protein. May be involved in the establishment and maintenance of specific neuronal connections in the brain. This chain is Protocadherin alpha-5 (PCDHA5), found in Homo sapiens (Human).